The following is a 55-amino-acid chain: Large ribosomal subunit protein bL33 (55 aa).

Basic and acidic residues predominate over residues methionine 1–leucine 11. The interval methionine 1–lysine 27 is disordered. A compositionally biased stretch (polar residues) spans threonine 14–threonine 24.

Belongs to the bacterial ribosomal protein bL33 family.

In Herminiimonas arsenicoxydans, this protein is Large ribosomal subunit protein bL33.